Reading from the N-terminus, the 62-residue chain is Endoregulin (62 aa).

The chain crosses the membrane as a helical span at residues 25 to 45 (LAVIILFITAVLLLILFAIVF).

Homooligomer. Can also form heterooligomers with other sarcoplasmic/endoplasmic reticulum calcium ATPase (SERCA) regulators ARLN, PLN, SLN and STRIT1/DWORF. Monomer. Interacts as a monomer with ATP2A2/SERCA2; the interaction results in inhibition of ATP2A2 Ca(2+) affinity.

It localises to the endoplasmic reticulum membrane. Functionally, inhibits the activity of the calcium ATPases ATP2A2/SERCA2 and ATP2A3/SERCA3 by decreasing their apparent affinity for Ca(2+). The chain is Endoregulin from Homo sapiens (Human).